The chain runs to 264 residues: MKTVIQDTADVYFKRKSDGKLVFTAEAQTASFSQAISEEKLRGGIGNKPLYILKSEKEINLTVKNAFFDLEWLAMTQGETIQEETKVKVFDREHGLIVDDTNKVTLKGKPVSDVTFYNKKGLTYKIAVSTDGTYTIPTAFAAAKDKLTAVYQIEKVGRRLAIKASKFSERYEVEYRTIAYNPDTEEVYSDIYIQFPNVSPSGEFEMSLENGNALAPEIKFEALADTDTDEMAVVIEASRDENTAAPVEDTTGSTQSSDLGGTTE.

Residues 1 to 76 (MKTVIQDTAD…FFDLEWLAMT (76 aa)) are interaction with Bacillus subtilis DSR2. Positions 237-264 (ASRDENTAAPVEDTTGSTQSSDLGGTTE) are disordered. Residues 250-264 (TTGSTQSSDLGGTTE) are compositionally biased toward polar residues.

In terms of assembly, interacts (via N-terminus) as a monomer with Bacillus subtilis defense protein DSR2 (via C-terminus) in a 4:4 DSR2-Tube assembly; this interaction induces a conformation change of the tube protein and activates the NADase activity of DSR2 and leads to an abortive infection.

It is found in the virion. The sequence is that of Tail tube protein from Bacillus phage SPR (Bacteriophage SPR).